The sequence spans 426 residues: UDP-N-acetylglucosamine 1-carboxyvinyltransferase (426 aa).

22–23 (KN) contributes to the phosphoenolpyruvate binding site. A UDP-N-acetyl-alpha-D-glucosamine-binding site is contributed by R93. The active-site Proton donor is the D117. Residues D312 and M334 each contribute to the UDP-N-acetyl-alpha-D-glucosamine site.

Belongs to the EPSP synthase family. MurA subfamily.

The protein localises to the cytoplasm. The enzyme catalyses phosphoenolpyruvate + UDP-N-acetyl-alpha-D-glucosamine = UDP-N-acetyl-3-O-(1-carboxyvinyl)-alpha-D-glucosamine + phosphate. Its pathway is cell wall biogenesis; peptidoglycan biosynthesis. Functionally, cell wall formation. Adds enolpyruvyl to UDP-N-acetylglucosamine. In Treponema denticola (strain ATCC 35405 / DSM 14222 / CIP 103919 / JCM 8153 / KCTC 15104), this protein is UDP-N-acetylglucosamine 1-carboxyvinyltransferase.